The primary structure comprises 358 residues: Aromatic amino acid aminotransferase (358 aa).

K222 carries the N6-(pyridoxal phosphate)lysine modification.

The protein belongs to the class-II pyridoxal-phosphate-dependent aminotransferase family. As to quaternary structure, homodimer. Requires pyridoxal 5'-phosphate as cofactor.

It carries out the reaction an aromatic L-alpha-amino acid + 2-oxoglutarate = an aromatic oxo-acid + L-glutamate. Aminotransferase that catalyzes the conversion of aromatic amino acids and 2-oxoglutarate into corresponding aromatic oxo acids and L-glutamate. In Mycobacterium sp. (strain KMS), this protein is Aromatic amino acid aminotransferase.